The primary structure comprises 185 residues: Ribosome-recycling factor (185 aa).

This sequence belongs to the RRF family.

It localises to the cytoplasm. Functionally, responsible for the release of ribosomes from messenger RNA at the termination of protein biosynthesis. May increase the efficiency of translation by recycling ribosomes from one round of translation to another. The sequence is that of Ribosome-recycling factor from Shewanella sp. (strain ANA-3).